The following is a 1128-amino-acid chain: DNA-directed RNA polymerase subunit Rpo2 (1128 aa).

DsDNA contacts are provided by residues Lys-178, 181-182 (SN), Lys-206, 435-439 (RGQPN), and 1027-1032 (RFGEME). Residues Cys-1061, Cys-1064, Cys-1079, and His-1082 each contribute to the Zn(2+) site.

Belongs to the RNA polymerase beta chain family. As to quaternary structure, part of the 13-subunit RNA polymerase complex. The cofactor is Zn(2+).

It is found in the cytoplasm. It carries out the reaction RNA(n) + a ribonucleoside 5'-triphosphate = RNA(n+1) + diphosphate. Its function is as follows. DNA-dependent RNA polymerase (RNAP) catalyzes the transcription of DNA into RNA using the four ribonucleoside triphosphates as substrates. This subunit is involved in DNA promoter recognition. The protein is DNA-directed RNA polymerase subunit Rpo2 of Saccharolobus shibatae (strain ATCC 51178 / DSM 5389 / JCM 8931 / NBRC 15437 / B12) (Sulfolobus shibatae).